Here is a 166-residue protein sequence, read N- to C-terminus: Interferon gamma (166 aa).

The signal sequence occupies residues 1–23; sequence MKYTSSFLALLLSVLLGFSGSYG. Gln24 carries the pyrrolidone carboxylic acid modification. Asn39 and Asn106 each carry an N-linked (GlcNAc...) asparagine glycan.

Belongs to the type II (or gamma) interferon family. In terms of assembly, homodimer. Interacts with IFNGR1 (via extracellular domain); this interaction promotes IFNGR1 dimerization. Released primarily from activated T lymphocytes.

It localises to the secreted. In terms of biological role, type II interferon produced by immune cells such as T-cells and NK cells that plays crucial roles in antimicrobial, antiviral, and antitumor responses by activating effector immune cells and enhancing antigen presentation. Primarily signals through the JAK-STAT pathway after interaction with its receptor IFNGR1 to affect gene regulation. Upon IFNG binding, IFNGR1 intracellular domain opens out to allow association of downstream signaling components JAK2, JAK1 and STAT1, leading to STAT1 activation, nuclear translocation and transcription of IFNG-regulated genes. Many of the induced genes are transcription factors such as IRF1 that are able to further drive regulation of a next wave of transcription. Plays a role in class I antigen presentation pathway by inducing a replacement of catalytic proteasome subunits with immunoproteasome subunits. In turn, increases the quantity, quality, and repertoire of peptides for class I MHC loading. Increases the efficiency of peptide generation also by inducing the expression of activator PA28 that associates with the proteasome and alters its proteolytic cleavage preference. Up-regulates as well MHC II complexes on the cell surface by promoting expression of several key molecules such as cathepsins B/CTSB, H/CTSH, and L/CTSL. Participates in the regulation of hematopoietic stem cells during development and under homeostatic conditions by affecting their development, quiescence, and differentiation. The polypeptide is Interferon gamma (IFNG) (Capra hircus (Goat)).